The following is a 490-amino-acid chain: Bifunctional protein HldE (490 aa).

The ribokinase stretch occupies residues 1-328 (MFSFDALLQA…LRRRILPHAS (328 aa)). 205-208 (NRKE) contacts ATP. Residue D275 is part of the active site. The interval 358–490 (FTNGCFDILH…LVARAREGQS (133 aa)) is cytidylyltransferase.

It in the N-terminal section; belongs to the carbohydrate kinase PfkB family. This sequence in the C-terminal section; belongs to the cytidylyltransferase family. Homodimer.

It catalyses the reaction D-glycero-beta-D-manno-heptose 7-phosphate + ATP = D-glycero-beta-D-manno-heptose 1,7-bisphosphate + ADP + H(+). The enzyme catalyses D-glycero-beta-D-manno-heptose 1-phosphate + ATP + H(+) = ADP-D-glycero-beta-D-manno-heptose + diphosphate. Its pathway is nucleotide-sugar biosynthesis; ADP-L-glycero-beta-D-manno-heptose biosynthesis; ADP-L-glycero-beta-D-manno-heptose from D-glycero-beta-D-manno-heptose 7-phosphate: step 1/4. The protein operates within nucleotide-sugar biosynthesis; ADP-L-glycero-beta-D-manno-heptose biosynthesis; ADP-L-glycero-beta-D-manno-heptose from D-glycero-beta-D-manno-heptose 7-phosphate: step 3/4. In terms of biological role, catalyzes the phosphorylation of D-glycero-D-manno-heptose 7-phosphate at the C-1 position to selectively form D-glycero-beta-D-manno-heptose-1,7-bisphosphate. Functionally, catalyzes the ADP transfer from ATP to D-glycero-beta-D-manno-heptose 1-phosphate, yielding ADP-D-glycero-beta-D-manno-heptose. The sequence is that of Bifunctional protein HldE from Rhodopseudomonas palustris (strain TIE-1).